An 859-amino-acid polypeptide reads, in one-letter code: Kinesin-like protein KIN-14T (859 aa).

The Kinesin motor domain maps to 91 to 411 (NIRVFCRVKP…LNFATRAKNI (321 aa)). 168–175 (GQTGTGKT) is an ATP binding site. The stretch at 422-463 (QAKKEAVMMNLQKMMEKIEQEREMSLRKMRNLNETLEKLTGK) forms a coiled coil. Residues 511–530 (LSGADFSVTPNSSSFKSRRN) form a disordered region. The span at 518–530 (VTPNSSSFKSRRN) shows a compositional bias: polar residues.

It belongs to the TRAFAC class myosin-kinesin ATPase superfamily. Kinesin family. KIN-14 subfamily.

The polypeptide is Kinesin-like protein KIN-14T (Arabidopsis thaliana (Mouse-ear cress)).